We begin with the raw amino-acid sequence, 98 residues long: uncharacterized protein (98 aa).

Residues 19–31 (RRMSKRSKNKAKK) are compositionally biased toward basic residues. The interval 19 to 47 (RRMSKRSKNKAKKERVPVEDRPPTPMPTS) is disordered.

This sequence belongs to the lymphocryptovirus BNLF2b family.

This is an uncharacterized protein from Homo sapiens (Human).